A 60-amino-acid chain; its full sequence is Metallothionein (60 aa).

Positions 1–28 (MDPCECSKGGTCNCGGSCTCTNCSCTTC) are beta. The a divalent metal cation site is built by Cys-4, Cys-6, Cys-12, Cys-14, Cys-18, Cys-20, Cys-23, Cys-25, Cys-28, Cys-32, Cys-33, Cys-35, Cys-36, Cys-40, Cys-43, Cys-47, Cys-49, Cys-54, Cys-58, and Cys-59. The interval 29–60 (KKSCCPCCPSGCPKCASGCVCKGKTCDAACCQ) is alpha.

This sequence belongs to the metallothionein superfamily. Type 1 family.

Metallothioneins have a high content of cysteine residues that bind various heavy metals. This is Metallothionein (mt) from Perca fluviatilis (European perch).